The chain runs to 264 residues: MEMO1 family protein Mbur_2394 (264 aa).

This sequence belongs to the MEMO1 family.

The sequence is that of MEMO1 family protein Mbur_2394 from Methanococcoides burtonii (strain DSM 6242 / NBRC 107633 / OCM 468 / ACE-M).